A 299-amino-acid chain; its full sequence is Tyrosine recombinase XerC (299 aa).

One can recognise a Core-binding (CB) domain in the interval 1–85 (MQNELDAYFE…SVRGLYRYLN (85 aa)). One can recognise a Tyr recombinase domain in the interval 106–285 (RLPRLLDTDR…DFQHLAKVYD (180 aa)). Catalysis depends on residues Arg-146, Lys-170, His-237, Arg-240, and His-263. Tyr-272 acts as the O-(3'-phospho-DNA)-tyrosine intermediate in catalysis.

The protein belongs to the 'phage' integrase family. XerC subfamily. In terms of assembly, forms a cyclic heterotetrameric complex composed of two molecules of XerC and two molecules of XerD.

It is found in the cytoplasm. In terms of biological role, site-specific tyrosine recombinase, which acts by catalyzing the cutting and rejoining of the recombining DNA molecules. The XerC-XerD complex is essential to convert dimers of the bacterial chromosome into monomers to permit their segregation at cell division. It also contributes to the segregational stability of plasmids. In Stutzerimonas stutzeri (strain A1501) (Pseudomonas stutzeri), this protein is Tyrosine recombinase XerC.